Reading from the N-terminus, the 98-residue chain is Cell division protein FtsB (98 aa).

Topologically, residues 1–3 are cytoplasmic; it reads MKR. A helical transmembrane segment spans residues 4–21; it reads LLFVLIALLAMLQYRLWL. Topologically, residues 22–98 are periplasmic; the sequence is GDKSLADSFH…GGERGGVPEN (77 aa). Positions 31–74 form a coiled coil; sequence HLQEQIKLQQQSNAQLVARNQVLREEISDLRSGTEALEERARNE.

Belongs to the FtsB family. As to quaternary structure, part of a complex composed of FtsB, FtsL and FtsQ.

Its subcellular location is the cell inner membrane. Its function is as follows. Essential cell division protein. May link together the upstream cell division proteins, which are predominantly cytoplasmic, with the downstream cell division proteins, which are predominantly periplasmic. This chain is Cell division protein FtsB, found in Shewanella pealeana (strain ATCC 700345 / ANG-SQ1).